Consider the following 461-residue polypeptide: Lysosomal proton-coupled steroid conjugate and bile acid symporter SLC46A3 (461 aa).

A signal peptide spans Met1–Thr25. The Extracellular segment spans residues Gln26 to Asn73. N-linked (GlcNAc...) asparagine glycans are attached at residues Asn38, Asn46, and Asn53. Residues Leu74–Ile94 traverse the membrane as a helical segment. Over Ser95–Lys101 the chain is Cytoplasmic. The chain crosses the membrane as a helical span at residues Phe102–Phe124. At Ala125 to Ala133 the chain is on the extracellular side. The chain crosses the membrane as a helical span at residues Ser134 to Val156. Over Asp157 to Ala170 the chain is Cytoplasmic. A helical transmembrane segment spans residues Ile171–Ile191. Over Arg192–Glu197 the chain is Extracellular. The chain crosses the membrane as a helical span at residues Trp198–Leu218. Over Gly219–Cys261 the chain is Cytoplasmic. A helical transmembrane segment spans residues Leu262 to Ile282. Residues Leu283–Glu294 lie on the Extracellular side of the membrane. Residues Val295–Ile315 traverse the membrane as a helical segment. Residues Trp316–Asp324 lie on the Cytoplasmic side of the membrane. The chain crosses the membrane as a helical span at residues Ile325–Ala345. Topologically, residues Ser346–Thr347 are extracellular. Residues Thr348–Leu368 form a helical membrane-spanning segment. The Cytoplasmic segment spans residues Arg369–Gly382. Residues Thr383–Phe403 form a helical membrane-spanning segment. Topologically, residues Asn404–Pro415 are extracellular. The chain crosses the membrane as a helical span at residues Gly416–Val436. Residues Lys437 to Arg461 lie on the Cytoplasmic side of the membrane. The Tyrosine-based lysosomal-sorting motif motif lies at Tyr446–Leu449.

This sequence belongs to the major facilitator superfamily. SLC46A family.

The protein localises to the lysosome membrane. The enzyme catalyses estrone 3-sulfate(out) + n H(+)(out) = estrone 3-sulfate(in) + n H(+)(in). The catalysed reaction is 25-hydroxyvitamin D3 sulfate(out) + n H(+)(out) = 25-hydroxyvitamin D3 sulfate(in) + n H(+)(in). It catalyses the reaction cholate(out) + n H(+)(out) = cholate(in) + n H(+)(in). It carries out the reaction glycocholate(out) + n H(+)(out) = glycocholate(in) + n H(+)(in). The enzyme catalyses taurocholate(out) + n H(+)(out) = taurocholate(in) + n H(+)(in). The catalysed reaction is dehydroepiandrosterone 3-sulfate(out) + n H(+)(out) = dehydroepiandrosterone 3-sulfate(in) + n H(+)(in). It catalyses the reaction N-acetyl-D-muramoyl-L-alanyl-D-isoglutamine(out) + n H(+)(out) = N-acetyl-D-muramoyl-L-alanyl-D-isoglutamine(in) + n H(+)(in). It carries out the reaction 2',3'-cGAMP(out) + n H(+)(out) = 2',3'-cGAMP(in) + n H(+)(in). In terms of biological role, lysosomal proton-coupled steroid conjugate and bile acid transporter. Preferentially recognizes lipophilic steroid conjugates or bile acis as endogenous substrates and seems to mediate escape from lysosomes to the cytoplasm. Modulates hepatic cytosolic copper homeostasis, maybe acting as a lysosomal copper transporter and sequestering copper ions in the lysosome. Transports catabolites of non-cleavable antibody-drug conjugates from the lysosome to the cytoplasm. Delivers pathogen-associated molecular patterns to cytosolic pattern recognition receptors as part of the innate immune response to microbes. Selectively transports bacterial muramyl dipeptide (MDP) into the cytosol for recognition by NOD2, triggering inflammatory responses. Likely acts as a redundant importer of cyclic GMP-AMP dinucleotides (cGAMPs) in monocyte and macrophage cell lineages. The transport mechanism, its electrogenicity and stoichiometry remain to be elucidated. This Homo sapiens (Human) protein is Lysosomal proton-coupled steroid conjugate and bile acid symporter SLC46A3.